The primary structure comprises 82 residues: uncharacterized protein (82 aa).

The next 3 membrane-spanning stretches (helical) occupy residues 4 to 26 (LDIA…TCIC), 31 to 48 (LMPM…FTIF), and 52 to 74 (FLGW…LIVV).

The protein resides in the cell membrane. This is an uncharacterized protein from Bacillus subtilis (strain 168).